The primary structure comprises 256 residues: Thiazole synthase (256 aa).

Lys-97 (schiff-base intermediate with DXP) is an active-site residue. Residues Gly-158, 184–185 (AG), and 206–207 (NT) each bind 1-deoxy-D-xylulose 5-phosphate.

Belongs to the ThiG family. In terms of assembly, homotetramer. Forms heterodimers with either ThiH or ThiS.

Its subcellular location is the cytoplasm. The catalysed reaction is [ThiS sulfur-carrier protein]-C-terminal-Gly-aminoethanethioate + 2-iminoacetate + 1-deoxy-D-xylulose 5-phosphate = [ThiS sulfur-carrier protein]-C-terminal Gly-Gly + 2-[(2R,5Z)-2-carboxy-4-methylthiazol-5(2H)-ylidene]ethyl phosphate + 2 H2O + H(+). It functions in the pathway cofactor biosynthesis; thiamine diphosphate biosynthesis. Functionally, catalyzes the rearrangement of 1-deoxy-D-xylulose 5-phosphate (DXP) to produce the thiazole phosphate moiety of thiamine. Sulfur is provided by the thiocarboxylate moiety of the carrier protein ThiS. In vitro, sulfur can be provided by H(2)S. The polypeptide is Thiazole synthase (Pelotomaculum thermopropionicum (strain DSM 13744 / JCM 10971 / SI)).